Consider the following 732-residue polypeptide: 1,4-alpha-glucan branching enzyme GlgB (732 aa).

The Nucleophile role is filled by Asp-409. Glu-462 serves as the catalytic Proton donor.

It belongs to the glycosyl hydrolase 13 family. GlgB subfamily. In terms of assembly, monomer.

The enzyme catalyses Transfers a segment of a (1-&gt;4)-alpha-D-glucan chain to a primary hydroxy group in a similar glucan chain.. The protein operates within glycan biosynthesis; glycogen biosynthesis. Functionally, catalyzes the formation of the alpha-1,6-glucosidic linkages in glycogen by scission of a 1,4-alpha-linked oligosaccharide from growing alpha-1,4-glucan chains and the subsequent attachment of the oligosaccharide to the alpha-1,6 position. This Corynebacterium diphtheriae (strain ATCC 700971 / NCTC 13129 / Biotype gravis) protein is 1,4-alpha-glucan branching enzyme GlgB.